Consider the following 545-residue polypeptide: 2-succinyl-5-enolpyruvyl-6-hydroxy-3-cyclohexene-1-carboxylate synthase (545 aa).

Belongs to the TPP enzyme family. MenD subfamily. Homodimer. Mg(2+) serves as cofactor. Requires Mn(2+) as cofactor. Thiamine diphosphate is required as a cofactor.

The catalysed reaction is isochorismate + 2-oxoglutarate + H(+) = 5-enolpyruvoyl-6-hydroxy-2-succinyl-cyclohex-3-ene-1-carboxylate + CO2. It participates in quinol/quinone metabolism; 1,4-dihydroxy-2-naphthoate biosynthesis; 1,4-dihydroxy-2-naphthoate from chorismate: step 2/7. The protein operates within quinol/quinone metabolism; menaquinone biosynthesis. In terms of biological role, catalyzes the thiamine diphosphate-dependent decarboxylation of 2-oxoglutarate and the subsequent addition of the resulting succinic semialdehyde-thiamine pyrophosphate anion to isochorismate to yield 2-succinyl-5-enolpyruvyl-6-hydroxy-3-cyclohexene-1-carboxylate (SEPHCHC). The protein is 2-succinyl-5-enolpyruvyl-6-hydroxy-3-cyclohexene-1-carboxylate synthase of Nocardia farcinica (strain IFM 10152).